Consider the following 427-residue polypeptide: ATP-dependent RNA helicase DDX39A (427 aa).

The segment covering 1–19 (MAEQDVENELLDYDEDEEP) has biased composition (acidic residues). The tract at residues 1–36 (MAEQDVENELLDYDEDEEPQAPQESTPAPPKKDVKG) is disordered. At alanine 2 the chain carries N-acetylalanine. Residue lysine 31 forms a Glycyl lysine isopeptide (Lys-Gly) (interchain with G-Cter in SUMO2) linkage. The residue at position 35 (lysine 35) is an N6-acetyllysine; alternate. A Glycyl lysine isopeptide (Lys-Gly) (interchain with G-Cter in SUMO2); alternate cross-link involves residue lysine 35. At serine 37 the chain carries Phosphoserine. Positions 44 to 72 (SGFRDFLLKPELLRAIVDCGFEHPSEVQH) match the Q motif motif. The region spanning 75 to 248 (IPQAILGMDV…RKFMQDPMEV (174 aa)) is the Helicase ATP-binding domain. Residue 88-95 (AKSGMGKT) participates in ATP binding. Residues lysine 154 and lysine 162 each participate in a glycyl lysine isopeptide (Lys-Gly) (interchain with G-Cter in SUMO2) cross-link. Threonine 171 is modified (phosphothreonine). The short motif at 195–198 (DECD) is the DECD box element. Residues lysine 240 and lysine 255 each participate in a glycyl lysine isopeptide (Lys-Gly) (interchain with G-Cter in SUMO2) cross-link. One can recognise a Helicase C-terminal domain in the interval 260–421 (GLQQYYVKLK…ELPEEIDIST (162 aa)). Serine 426 bears the Phosphoserine mark.

This sequence belongs to the DEAD box helicase family. DECD subfamily. As to quaternary structure, binds ALYREF/THOC4 and DDX39B/BAT1. Interacts with the apo-AREX complex component SARNP. Interacts with MX1. Interacts with MCM3AP isoform GANP. Interacts with ECD. Interacts with PHAX; this interaction stimulates PHAX RNA binding activity. SUMOylated by RANBP2; SUMOylation modification affects its ability to bind RNA.

It is found in the nucleus. The protein resides in the cytoplasm. It catalyses the reaction ATP + H2O = ADP + phosphate + H(+). Helicase that plays an essential role in mRNA export and is involved in multiple steps in RNA metabolism including alternative splicing. Regulates nuclear mRNA export to the cytoplasm through association with ECD. Also involved in spliceosomal uridine-rich small nuclear RNA (U snRNA) export by stimulating the RNA binding of adapter PHAX. Plays a role in the negative regulation of type I IFN production by increasing the nuclear retention of antiviral transcripts and thus reducing their protein expression. Independently of the interferon pathway, plays an antiviral role against alphaviruses by binding to a 5' conserved sequence element in the viral genomic RNA. The polypeptide is ATP-dependent RNA helicase DDX39A (Mus musculus (Mouse)).